Consider the following 40-residue polypeptide: Dihydrolipoyl dehydrogenase (40 aa).

36–40 lines the FAD pocket; sequence EKRGT.

It belongs to the class-I pyridine nucleotide-disulfide oxidoreductase family. Homodimer. FAD is required as a cofactor.

The protein localises to the mitochondrion matrix. It catalyses the reaction N(6)-[(R)-dihydrolipoyl]-L-lysyl-[protein] + NAD(+) = N(6)-[(R)-lipoyl]-L-lysyl-[protein] + NADH + H(+). In terms of biological role, lipoamide dehydrogenase is a component of the glycine cleavage system as well as of the alpha-ketoacid dehydrogenase complexes. The pyruvate dehydrogenase complex contains multiple copies of three enzymatic components: pyruvate dehydrogenase (E1), dihydrolipoamide acetyltransferase (E2) and lipoamide dehydrogenase (E3). In Solanum tuberosum (Potato), this protein is Dihydrolipoyl dehydrogenase.